Reading from the N-terminus, the 173-residue chain is Photosystem I assembly protein Ycf3 (173 aa).

TPR repeat units lie at residues 35 to 68 (AYIY…EENK), 72 to 105 (GETL…NPKQ), and 120 to 153 (GRNA…YPGG).

Belongs to the Ycf3 family.

The protein resides in the cellular thylakoid membrane. Essential for the assembly of the photosystem I (PSI) complex. May act as a chaperone-like factor to guide the assembly of the PSI subunits. The sequence is that of Photosystem I assembly protein Ycf3 from Prochlorococcus marinus (strain MIT 9312).